A 435-amino-acid polypeptide reads, in one-letter code: Secreted RxLR effector protein 35 (435 aa).

Positions Met1–Gly22 are cleaved as a signal peptide. Positions Arg48–Arg65 match the RxLR-dEER motif. Residues Arg336–Thr357 form a disordered region. The segment covering Asp342–Pro354 has biased composition (polar residues).

The protein belongs to the RxLR effector family.

The protein localises to the secreted. It is found in the host nucleus. Functionally, secreted effector that acts as an elicitor that induces cell death in host plant cells. In Plasmopara viticola (Downy mildew of grapevine), this protein is Secreted RxLR effector protein 35.